Consider the following 646-residue polypeptide: ATP-dependent zinc metalloprotease FtsH (646 aa).

Residues 1–27 form a disordered region; sequence MTNNQTDRPRPPGPESRRFDNNDKNNR. Residues 1-35 are Cytoplasmic-facing; the sequence is MTNNQTDRPRPPGPESRRFDNNDKNNRNRWGPIPS. Residues 7 to 26 are compositionally biased toward basic and acidic residues; the sequence is DRPRPPGPESRRFDNNDKNN. Residues 36–56 form a helical membrane-spanning segment; that stretch reads WAWIVLIVALLLNWLVAPILF. Over 57–144 the chain is Extracellular; sequence PEGKGAVSIP…QPESSTRSLL (88 aa). The helical transmembrane segment at 145 to 165 threads the bilayer; the sequence is LSILISFGPTILFFLLFLWLI. Residues 166 to 646 are Cytoplasmic-facing; sequence SKAQSSQQGL…GLGEKQPEPA (481 aa). 237–244 is a binding site for ATP; it reads GPPGTGKT. His459 lines the Zn(2+) pocket. Glu460 is an active-site residue. Positions 463 and 535 each coordinate Zn(2+).

This sequence in the central section; belongs to the AAA ATPase family. The protein in the C-terminal section; belongs to the peptidase M41 family. As to quaternary structure, homohexamer. It depends on Zn(2+) as a cofactor.

The protein localises to the cell membrane. Acts as a processive, ATP-dependent zinc metallopeptidase for both cytoplasmic and membrane proteins. Plays a role in the quality control of integral membrane proteins. The sequence is that of ATP-dependent zinc metalloprotease FtsH from Thermobaculum terrenum (strain ATCC BAA-798 / CCMEE 7001 / YNP1).